A 523-amino-acid chain; its full sequence is (R)-citramalate synthase (523 aa).

Positions V6–K272 constitute a Pyruvate carboxyltransferase domain.

It belongs to the alpha-IPM synthase/homocitrate synthase family.

The catalysed reaction is pyruvate + acetyl-CoA + H2O = (3R)-citramalate + CoA + H(+). Its pathway is amino-acid biosynthesis; L-isoleucine biosynthesis; 2-oxobutanoate from pyruvate: step 1/3. Inhibited by isoleucine. Functionally, catalyzes the condensation of pyruvate and acetyl-coenzyme A to form (R)-citramalate. Makes part of a pathway for isoleucine biosynthesis, i.e. the citramalate-dependent pathway. Also displays a low alpha-isopropylmalate synthase activity, using 2-oxoisovalerate as substrate, but is unable to use 2-oxoglutarate. The chain is (R)-citramalate synthase from Sulfolobus acidocaldarius (strain ATCC 33909 / DSM 639 / JCM 8929 / NBRC 15157 / NCIMB 11770).